We begin with the raw amino-acid sequence, 474 residues long: Gamma-aminobutyric acid receptor subunit beta-1 (474 aa).

The N-terminal stretch at 1 to 25 (MWTVQNRESLGLLSFPVMIAMVCCA) is a signal peptide. At 26-245 (HSANEPSNMS…SFRLKRNIGY (220 aa)) the chain is on the extracellular side. 2 N-linked (GlcNAc...) asparagine glycosylation sites follow: Asn33 and Asn105. Tyr122 provides a ligand contact to histamine. Cys161 and Cys175 are joined by a disulfide. A glycan (N-linked (GlcNAc...) asparagine) is linked at Asn174. Residues 181-182 (SY) and Thr227 each bind histamine. 2 residues coordinate 4-aminobutanoate: Tyr182 and Thr227. 3 consecutive transmembrane segments (helical) span residues 246-267 (FILQ…SFWI), 271-293 (ASAA…STHL), and 305-327 (AIDI…YAFV). At 328–451 (NYIFFGKGPQ…DLTDVNSIDK (124 aa)) the chain is on the cytoplasmic side. The helical transmembrane segment at 452–473 (WSRMFFPITFSLFNVVYWLYYV) threads the bilayer.

It belongs to the ligand-gated ion channel (TC 1.A.9) family. Gamma-aminobutyric acid receptor (TC 1.A.9.5) subfamily. GABRB1 sub-subfamily. As to quaternary structure, heteropentamer, formed by a combination of alpha (GABRA1-6), beta (GABRB1-3), gamma (GABRG1-3), delta (GABRD), epsilon (GABRE), rho (GABRR1-3), pi (GABRP) and theta (GABRQ) chains, each subunit exhibiting distinct physiological and pharmacological properties. Binds UBQLN1.

Its subcellular location is the postsynaptic cell membrane. The protein localises to the cell membrane. The enzyme catalyses chloride(in) = chloride(out). Its activity is regulated as follows. Potentiated by histamine. In terms of biological role, beta subunit of the heteropentameric ligand-gated chloride channel gated by gamma-aminobutyric acid (GABA), a major inhibitory neurotransmitter in the brain. GABA-gated chloride channels, also named GABA(A) receptors (GABAAR), consist of five subunits arranged around a central pore and contain GABA active binding site(s) located at the alpha and beta subunit interface(s). When activated by GABA, GABAARs selectively allow the flow of chloride anions across the cell membrane down their electrochemical gradient. Chloride influx into the postsynaptic neuron following GABAAR opening decreases the neuron ability to generate a new action potential, thereby reducing nerve transmission. Beta-containing GABAARs can simultaneously bind GABA and histamine where histamine binds at the interface of two neighboring beta subunits, which may be involved in the regulation of sleep and wakefulness. The protein is Gamma-aminobutyric acid receptor subunit beta-1 (GABRB1) of Bos taurus (Bovine).